The primary structure comprises 897 residues: Probable basic-leucine zipper transcription factor R (897 aa).

Disordered regions lie at residues 38-88 and 128-198; these read DDNI…NIET and YQQR…NSNS. The segment covering 44-75 has biased composition (low complexity); it reads NNNNNNNNNNNNNNNNNNNNNNNNNNNNNNNN. Residues 76–88 show a composition bias toward polar residues; it reads IGSPQIMNENIET. The stretch at 94–137 forms a coiled coil; sequence QYLERLQSIQQQQHQCQTQIQQQLQNYQQQYEDQYQQRQQQYQD. A compositionally biased stretch (low complexity) spans 128 to 140; it reads YQQRQQQYQDQYQ. Positions 141-157 are enriched in polar residues; the sequence is KPYSSPPLNFNSIPPIT. A compositionally biased stretch (low complexity) spans 158–198; it reads NNNNNNNNNNNNNNNNNNSNSNSNSNSNSNSNSNSNSNSNS. Coiled coils occupy residues 228-258 and 330-407; these read LQQQ…QQQQ and QQLQ…QQQQ. The segment at 461–516 is disordered; the sequence is LQLPTPFYSPQQQQQQHTPISSFIPPPSLPSSPPSPPSPPSPPPQQQQQQQQQQQQ. The segment covering 484–505 has biased composition (pro residues); sequence IPPPSLPSSPPSPPSPPSPPPQ. Over residues 506–516 the composition is skewed to low complexity; that stretch reads QQQQQQQQQQQ. The region spanning 557–620 is the bZIP domain; sequence ESKESIKKYN…SIEMMRMEPE (64 aa). Residues 559-564 form a basic motif region; the sequence is KESIKK. Positions 569–576 are leucine-zipper; it reads IASRNYRL.

Belongs to the bZIP family.

The protein localises to the nucleus. Its function is as follows. Probable transcriptional regulator. The polypeptide is Probable basic-leucine zipper transcription factor R (bzpR) (Dictyostelium discoideum (Social amoeba)).